A 385-amino-acid polypeptide reads, in one-letter code: MLDVHFGAGNIGRGFIGETLADNGFKITFVDVNDTLIDELNKRNGYTIELAAEGQKHIEVHDVKGINNGKDPKAVAEEIAQADMVTTAIGPKILKFIAPLIADGLKLRQANNNTTPIDIIACENMIGGSQSLKKSVYESLNEDEQAWADQNAGFPNAAVDRIVPLQKHDDPLFVSVEPFKEWVIDKSQMKNPKIQLKGVDYADDLEPYIERKLFSVNTGHATVAYTGNMKGYKTIGEAVKDDSVVDQAKHVLGETGDLLIQKWGFDPEVHHAYQKKILSRFENPYISDDIERVGRTPIRKLGFNERFIRPIRELKERGRDYSALVDTVGEMFFFNYPNDSESVKLQQLLKDEPIEQVIRETTDLKDEDLVNEIKAAYEKHLAAAK.

Residue 3–14 (DVHFGAGNIGRG) coordinates NAD(+).

The protein belongs to the mannitol dehydrogenase family.

It catalyses the reaction D-mannitol 1-phosphate + NAD(+) = beta-D-fructose 6-phosphate + NADH + H(+). This chain is Mannitol-1-phosphate 5-dehydrogenase, found in Lactiplantibacillus plantarum (strain ATCC BAA-793 / NCIMB 8826 / WCFS1) (Lactobacillus plantarum).